A 473-amino-acid chain; its full sequence is Nitrogenase molybdenum-iron protein alpha chain (473 aa).

Cysteine 64, cysteine 90, and cysteine 156 together coordinate [8Fe-7S] cluster. Residue cysteine 274 participates in [7Fe-Mo-9S-C-homocitryl] cluster binding.

This sequence belongs to the NifD/NifK/NifE/NifN family. As to quaternary structure, tetramer of two alpha and two beta chains. Forms complex with the iron protein (nitrogenase component 2). [8Fe-7S] cluster serves as cofactor. Requires [7Fe-Mo-9S-C-homocitryl] cluster as cofactor.

The catalysed reaction is N2 + 8 reduced [2Fe-2S]-[ferredoxin] + 16 ATP + 16 H2O = H2 + 8 oxidized [2Fe-2S]-[ferredoxin] + 2 NH4(+) + 16 ADP + 16 phosphate + 6 H(+). In terms of biological role, this molybdenum-iron protein is part of the nitrogenase complex that catalyzes the key enzymatic reactions in nitrogen fixation. The sequence is that of Nitrogenase molybdenum-iron protein alpha chain (nifD) from Frankia alni.